The sequence spans 470 residues: 63 kDa sperm flagellar membrane protein (470 aa).

An N-terminal signal peptide occupies residues Met1–Ala25. In terms of domain architecture, EGF-like 1 spans Pro41–Thr80. Cystine bridges form between Cys45–Cys57, Cys50–Cys66, and Cys68–Cys79. 3 N-linked (GlcNAc...) asparagine glycosylation sites follow: Asn78, Asn170, and Asn219. Residues Val81–Glu205 form the SEA domain. The EGF-like 2; calcium-binding domain occupies Asp202 to Ile250. Intrachain disulfides connect Cys206–Cys220, Cys214–Cys229, Cys231–Cys249, Cys253–Cys265, Cys258–Cys277, and Cys279–Cys291. Residues Cys249–Asp292 form the EGF-like 3 domain. N-linked (GlcNAc...) asparagine glycosylation occurs at Asn322. Gly446 is lipidated: GPI-anchor amidated glycine. Positions Ser447–His470 are cleaved as a propeptide — removed in mature form.

As to expression, sperm.

The protein resides in the cell projection. It is found in the cilium. The protein localises to the flagellum membrane. The sequence is that of 63 kDa sperm flagellar membrane protein from Strongylocentrotus purpuratus (Purple sea urchin).